We begin with the raw amino-acid sequence, 336 residues long: Protein SGT1 homolog (336 aa).

Residue alanine 2 is modified to N-acetylalanine. 3 TPR repeats span residues 11-44 (SQRLFQSFSDALIDGDPQAALEELTKALEQNPDD), 45-78 (AQYYCQRAYCHILLGKYRDGIADVKKSLELNPNN), and 79-112 (CTALLRKGICEYHEKDYASALETFAEGQKLDSTD). A CS domain is found at 140–229 (QSKIKYDWYQ…PEAVRWEKLE (90 aa)). Position 236 is a phosphothreonine (threonine 236). The SGS domain occupies 247–336 (MYPSSSHYTR…PPDDMEWKQY (90 aa)). Serine 252 is subject to Phosphoserine. A Phosphothreonine modification is found at threonine 255. Lysine 266 is covalently cross-linked (Glycyl lysine isopeptide (Lys-Gly) (interchain with G-Cter in SUMO1); alternate). Lysine 266 is covalently cross-linked (Glycyl lysine isopeptide (Lys-Gly) (interchain with G-Cter in SUMO2); alternate). The residue at position 302 (serine 302) is a Phosphoserine.

It belongs to the SGT1 family. In terms of assembly, probably associates with SCF (SKP1-CUL1-F-box protein) complex through interaction with SKP1. Interacts with S100A6. Interacts with HSP90. In terms of processing, phosphorylated at Ser-252 and Ser-302, dephosphorylation promotes nuclear translocation, most likely due to disruption of the SUGT1-HSP90 complex.

It localises to the cytoplasm. The protein resides in the nucleus. In terms of biological role, may play a role in ubiquitination and subsequent proteasomal degradation of target proteins. The protein is Protein SGT1 homolog of Mus musculus (Mouse).